An 832-amino-acid chain; its full sequence is Subtilisin-like protease SBT2.4 (832 aa).

A signal peptide spans 1–27 (METNPRKLRSYSYICLIVCIFVLVVCA). The 65-residue stretch at 74 to 138 (EAKKIEEIHD…VEEDKGVKLM (65 aa)) folds into the Inhibitor I9 domain. In terms of domain architecture, Peptidase S8 spans 150–690 (QQVWQKISNE…AGHVNPARAL (541 aa)). Catalysis depends on aspartate 174, which acts as the Charge relay system. N-linked (GlcNAc...) asparagine glycosylation is found at asparagine 196 and asparagine 238. The Charge relay system role is filled by histidine 252. A PA domain is found at 425-524 (TNGSVLQPLT…SAAQIILRYY (100 aa)). The N-linked (GlcNAc...) asparagine glycan is linked to asparagine 426. Residue serine 618 is the Charge relay system of the active site. Asparagine 761, asparagine 774, and asparagine 800 each carry an N-linked (GlcNAc...) asparagine glycan.

Belongs to the peptidase S8 family.

It is found in the secreted. In terms of biological role, serine protease required for epidermal surface formation in embryos and juvenile plants. Involved in embryonic cuticle formation downstream of BHLH95/ZOU. This Arabidopsis thaliana (Mouse-ear cress) protein is Subtilisin-like protease SBT2.4.